Here is a 271-residue protein sequence, read N- to C-terminus: Protein ABHD14A (271 aa).

The helical; Signal-anchor for type II membrane protein transmembrane segment at 35-55 (VALLGLSLLLMLLLYVGLPGP) threads the bilayer. Residue Asn-67 is glycosylated (N-linked (GlcNAc...) asparagine). Ser-171 acts as the Charge relay system in catalysis. Asn-201 carries an N-linked (GlcNAc...) asparagine glycan. Active-site charge relay system residues include Asp-222 and His-249.

It belongs to the AB hydrolase superfamily. ABHD14 family.

Its subcellular location is the cytoplasm. It localises to the membrane. Functionally, possible role in granule neuron development. The chain is Protein ABHD14A from Homo sapiens (Human).